A 506-amino-acid polypeptide reads, in one-letter code: 7,8-dihydro-6-hydroxymethylpterin dimethyltransferase (506 aa).

6 residues coordinate [4Fe-4S] cluster: Cys-73, Cys-77, Cys-80, Cys-98, Cys-102, and Cys-105. The region spanning 82–300 (NHKSTTILAN…FIKLVEEQTD (219 aa)) is the Radical SAM core domain.

Belongs to the radical SAM superfamily. Requires [4Fe-4S] cluster as cofactor. It depends on S-adenosyl-L-methionine as a cofactor.

The protein operates within cofactor biosynthesis; 5,6,7,8-tetrahydromethanopterin biosynthesis. In terms of biological role, is responsible for the addition of methyl groups at C-7 and C-9 of the pterin ring during methanopterin (MPT) biosynthesis. Catalyzes methylation of 7,8-dihydro-6-hydroxymethylpterin, likely using methylenetetrahydromethanopterin as a methyl group donor, via a radical-based mechanism. This chain is 7,8-dihydro-6-hydroxymethylpterin dimethyltransferase, found in Methanocaldococcus jannaschii (strain ATCC 43067 / DSM 2661 / JAL-1 / JCM 10045 / NBRC 100440) (Methanococcus jannaschii).